The sequence spans 282 residues: Bifunctional protein FolD (282 aa).

NADP(+) contacts are provided by residues 162 to 164, S187, and V228; that span reads GRS.

Belongs to the tetrahydrofolate dehydrogenase/cyclohydrolase family. In terms of assembly, homodimer.

It catalyses the reaction (6R)-5,10-methylene-5,6,7,8-tetrahydrofolate + NADP(+) = (6R)-5,10-methenyltetrahydrofolate + NADPH. The enzyme catalyses (6R)-5,10-methenyltetrahydrofolate + H2O = (6R)-10-formyltetrahydrofolate + H(+). The protein operates within one-carbon metabolism; tetrahydrofolate interconversion. In terms of biological role, catalyzes the oxidation of 5,10-methylenetetrahydrofolate to 5,10-methenyltetrahydrofolate and then the hydrolysis of 5,10-methenyltetrahydrofolate to 10-formyltetrahydrofolate. This chain is Bifunctional protein FolD, found in Thermus thermophilus (strain ATCC 27634 / DSM 579 / HB8).